The primary structure comprises 1061 residues: DNA primase TraC (1061 aa).

The 89-residue stretch at 850-938 folds into the Toprim domain; it reads PALVIGEGYA…GKAIFPIFAP (89 aa). Residues 1034–1061 are disordered; that stretch reads EGQRQKVQQLKQQDIEQQEQRQRRARTY.

Functionally, required for autonomous replication in E.coli. Transferred into the recipient cell during bacterial conjugation. Catalyzes the synthesis of short oligoribonucleotide primers with CpA or pCpA at their 5'-termini on a single-stranded template DNA. The protein is DNA primase TraC (traC) of Escherichia coli.